The following is a 317-amino-acid chain: L-lactate dehydrogenase (317 aa).

NAD(+) contacts are provided by residues Val17, Asp38, Lys43, Tyr68, and Gly82–Val83. Position 91 (Arg91) interacts with substrate. Residues Ser104, Val121 to Asn123, and Ser146 each bind NAD(+). Asn123–Asp126 is a substrate binding site. A substrate-binding site is contributed by Asp151–Arg154. 2 residues coordinate beta-D-fructose 1,6-bisphosphate: Lys156 and His171. His178 functions as the Proton acceptor in the catalytic mechanism. Tyr224 is modified (phosphotyrosine). Thr233 serves as a coordination point for substrate.

It belongs to the LDH/MDH superfamily. LDH family. In terms of assembly, homotetramer.

Its subcellular location is the cytoplasm. It carries out the reaction (S)-lactate + NAD(+) = pyruvate + NADH + H(+). The protein operates within fermentation; pyruvate fermentation to lactate; (S)-lactate from pyruvate: step 1/1. With respect to regulation, allosterically activated by fructose 1,6-bisphosphate (FBP). Catalyzes the conversion of lactate to pyruvate. The polypeptide is L-lactate dehydrogenase (Clostridium perfringens (strain ATCC 13124 / DSM 756 / JCM 1290 / NCIMB 6125 / NCTC 8237 / Type A)).